The chain runs to 851 residues: MAKTNISPGMQQYLDIKKDYPDAFLLFRMGDFYELFYEDAVKAAQLLEIGLTSRNKNAENPIPMAGVPHHSAQQYIDVLIELGYKVAVAEQMEDPKQAVGVVKREVVQVITPGTVVDSAKPDSANNFLVAVDFDGCRYGLAYMDVSTGEFCVTDLADFTSVRSEIQNLKAKEVLLGFDLSEEEQTILVKQMNLLLSYEETVYEDKSLIDGQLTTVELTAAGKLLQYVHKTQMRELSHLQALVHYEIKDYLQMSYATKSSLDLVENARTNKKHGSLYWLLDETKTAMGMRLLRSWIDRPLVSKEAILERQEIIQVFLNAFIERTDLSNSLKGVYDIERLSSRVSFGKANPKDLLQLGHTLAQVPYIKAILESFDSPCVDKLVNDIDSLPELEYLIRTAIDPDAPATISEGSIIRTGFDERLDHYRKVMREGTGWIADIEAKERQASGINNLKIDYNKKDGYYFHVTNSNLSLVPEHFFRKATLKNSERYGTAELAKIEGQMLEAREESSSLEYDIFMCIRAQVETYINRLQKLAKILATVDVLQSLAVVAETNHYIRPQFNDNHVITIQEGRHAVVEKVMGVQEYIPNSISFDQQTSIQLITGPNMSGKSTYMRQLALTVIMAQMGSFVAADHVDLPLFDAIFTRIGAADDLISGQSTFMVEMMEANQAIKRASDNSLILFDELGRGTATYDGMALAQAIIEYIHDRVGAKTIFATHYHELTDLSTKLTSLVNVHVATLEKDGDVTFLHKIAEGPADKSYGIHVAKIAGLPKSLLKRADEVLTRLETQSRSTEIISVPSQVESSSAVRQGQLSLFGDEEKAHEIRQALEAIDVMNMTPLQAMTTLYELKKLL.

Gly-602–Ser-609 lines the ATP pocket.

This sequence belongs to the DNA mismatch repair MutS family.

Its function is as follows. This protein is involved in the repair of mismatches in DNA. It is possible that it carries out the mismatch recognition step. This protein has a weak ATPase activity. The chain is DNA mismatch repair protein MutS from Streptococcus pyogenes serotype M28 (strain MGAS6180).